A 121-amino-acid polypeptide reads, in one-letter code: Large ribosomal subunit protein bL19 (121 aa).

It belongs to the bacterial ribosomal protein bL19 family.

Functionally, this protein is located at the 30S-50S ribosomal subunit interface and may play a role in the structure and function of the aminoacyl-tRNA binding site. The polypeptide is Large ribosomal subunit protein bL19 (Mesomycoplasma hyopneumoniae (strain 232) (Mycoplasma hyopneumoniae)).